A 95-amino-acid chain; its full sequence is uncharacterized protein (95 aa).

Residues 65-95 (DANDYDTTTTEEEDSSTTTTTDNETNSDDDI) form a disordered region.

This is an uncharacterized protein from Lymantria dispar multicapsid nuclear polyhedrosis virus (LdMNPV).